Reading from the N-terminus, the 478-residue chain is V-type ATP synthase beta chain (478 aa).

It belongs to the ATPase alpha/beta chains family.

Produces ATP from ADP in the presence of a proton gradient across the membrane. The V-type beta chain is a regulatory subunit. In Thermus thermophilus (strain ATCC BAA-163 / DSM 7039 / HB27), this protein is V-type ATP synthase beta chain.